The following is a 439-amino-acid chain: GTPase Obg (439 aa).

The region spanning 1 to 159 (MAFVDQAEIE…RKLKLELKVL (159 aa)) is the Obg domain. Residues 160–336 (ADVGLVGFPS…LMRLTADLLA (177 aa)) form the OBG-type G domain. GTP-binding positions include 166–173 (GFPSAGKS), 191–195 (FTTLS), 213–216 (DLPG), 283–286 (TKMD), and 317–319 (SAL). The Mg(2+) site is built by serine 173 and threonine 193. An OCT domain is found at 358 to 439 (DFKPEQHNFT…NSDFVFEFSD (82 aa)).

It belongs to the TRAFAC class OBG-HflX-like GTPase superfamily. OBG GTPase family. In terms of assembly, monomer. Mg(2+) serves as cofactor.

Its subcellular location is the cytoplasm. Functionally, an essential GTPase which binds GTP, GDP and possibly (p)ppGpp with moderate affinity, with high nucleotide exchange rates and a fairly low GTP hydrolysis rate. Plays a role in control of the cell cycle, stress response, ribosome biogenesis and in those bacteria that undergo differentiation, in morphogenesis control. This chain is GTPase Obg, found in Leuconostoc citreum (strain KM20).